Consider the following 91-residue polypeptide: Small ribosomal subunit protein bS20 (91 aa).

Belongs to the bacterial ribosomal protein bS20 family.

In terms of biological role, binds directly to 16S ribosomal RNA. The sequence is that of Small ribosomal subunit protein bS20 from Thermosipho melanesiensis (strain DSM 12029 / CIP 104789 / BI429).